The primary structure comprises 1409 residues: DNA-directed RNA polymerase subunit beta' (1409 aa).

The Zn(2+) site is built by Cys-72, Cys-74, Cys-87, and Cys-90. The Mg(2+) site is built by Asp-462, Asp-464, and Asp-466. Zn(2+) is bound by residues Cys-816, Cys-890, Cys-897, and Cys-900.

It belongs to the RNA polymerase beta' chain family. As to quaternary structure, the RNAP catalytic core consists of 2 alpha, 1 beta, 1 beta' and 1 omega subunit. When a sigma factor is associated with the core the holoenzyme is formed, which can initiate transcription. Mg(2+) serves as cofactor. The cofactor is Zn(2+).

It catalyses the reaction RNA(n) + a ribonucleoside 5'-triphosphate = RNA(n+1) + diphosphate. In terms of biological role, DNA-dependent RNA polymerase catalyzes the transcription of DNA into RNA using the four ribonucleoside triphosphates as substrates. The chain is DNA-directed RNA polymerase subunit beta' from Aromatoleum aromaticum (strain DSM 19018 / LMG 30748 / EbN1) (Azoarcus sp. (strain EbN1)).